Consider the following 290-residue polypeptide: MVMNMNHLHIFVKVGEKLNITEAAKELFISQPAVSKAIKNLESSLQLKLLIRDKHHGLMLTDIGKEILLLARQMKGIESKIYQVANRENKLLNGKVKIGSFPAVSTNIMPQAIAAFRSNYPLIRIELIEGTSDQIKGWVEDRTVDIGIAASPFEPFENQLLCNDYMVAVIPPQRDELKLEKHVDLETYQDDLIFCKGGHEIAMSNAFSQYNIELKENLTVQNAETLINMVKNNLGIGIISNFTLSSVPHQLIKKDIFPRVTRDIGVIAHSFEEITPAAHEFVKVLKAVVI.

An HTH lysR-type domain is found at 1 to 61 (MVMNMNHLHI…RDKHHGLMLT (61 aa)). The segment at residues 20 to 39 (ITEAAKELFISQPAVSKAIK) is a DNA-binding region (H-T-H motif).

It belongs to the LysR transcriptional regulatory family.

This is an uncharacterized protein from Bacillus subtilis (strain 168).